We begin with the raw amino-acid sequence, 283 residues long: 4-diphosphocytidyl-2-C-methyl-D-erythritol kinase (283 aa).

K10 is an active-site residue. 99-109 contributes to the ATP binding site; the sequence is PMGGGLGGGSS. D141 is a catalytic residue.

Belongs to the GHMP kinase family. IspE subfamily. As to quaternary structure, homodimer.

The enzyme catalyses 4-CDP-2-C-methyl-D-erythritol + ATP = 4-CDP-2-C-methyl-D-erythritol 2-phosphate + ADP + H(+). Its pathway is isoprenoid biosynthesis; isopentenyl diphosphate biosynthesis via DXP pathway; isopentenyl diphosphate from 1-deoxy-D-xylulose 5-phosphate: step 3/6. Catalyzes the phosphorylation of the position 2 hydroxy group of 4-diphosphocytidyl-2C-methyl-D-erythritol. This is 4-diphosphocytidyl-2-C-methyl-D-erythritol kinase from Salmonella enteritidis PT4 (strain P125109).